Here is a 761-residue protein sequence, read N- to C-terminus: NADP-dependent malic enzyme (761 aa).

Residues 1–437 form a malic enzyme region; sequence MPGIDKTDRA…QLSARRDPIA (437 aa). The Proton donor role is filled by Tyr49. Lys104 serves as the catalytic Proton acceptor. 3 residues coordinate a divalent metal cation: Glu146, Asp147, and Asp172. NADP(+) is bound by residues 205 to 208, Asn297, and Asn329; that span reads AGAA. The tract at residues 438–761 is phosphate acetyltransferase; it reads STLQRIVERV…AAIAAYNAGT (324 aa).

In the N-terminal section; belongs to the malic enzymes family. The protein in the C-terminal section; belongs to the phosphate acetyltransferase and butyryltransferase family. As to quaternary structure, homooctamer. The cofactor is Mg(2+). It depends on Mn(2+) as a cofactor.

The enzyme catalyses (S)-malate + NADP(+) = pyruvate + CO2 + NADPH. It carries out the reaction oxaloacetate + H(+) = pyruvate + CO2. The sequence is that of NADP-dependent malic enzyme (tme) from Rhizobium meliloti (strain 1021) (Ensifer meliloti).